Consider the following 726-residue polypeptide: Probable dipeptidyl-peptidase 5 (726 aa).

Residues 1–19 form the signal peptide; it reads MGALQWLSITAAAASAVSA. Residues asparagine 97, asparagine 153, asparagine 259, asparagine 398, asparagine 453, and asparagine 529 are each glycosylated (N-linked (GlcNAc...) asparagine). Serine 564 serves as the catalytic Charge relay system. The N-linked (GlcNAc...) asparagine glycan is linked to asparagine 611. Residues aspartate 647 and histidine 679 each act as charge relay system in the active site.

Belongs to the peptidase S9C family.

It is found in the secreted. Its function is as follows. Extracellular dipeptidyl-peptidase which removes N-terminal dipeptides sequentially from polypeptides having unsubstituted N-termini. The sequence is that of Probable dipeptidyl-peptidase 5 (dpp5) from Aspergillus niger.